The following is a 368-amino-acid chain: Agmatine deiminase (368 aa).

Cysteine 357 functions as the Amidino-cysteine intermediate in the catalytic mechanism.

This sequence belongs to the agmatine deiminase family. In terms of assembly, homodimer.

The enzyme catalyses agmatine + H2O = N-carbamoylputrescine + NH4(+). It participates in amine and polyamine biosynthesis; putrescine biosynthesis via agmatine pathway; N-carbamoylputrescine from agmatine: step 1/1. In terms of biological role, mediates the hydrolysis of agmatine into N-carbamoylputrescine in the arginine decarboxylase (ADC) pathway of putrescine biosynthesis, a basic polyamine. This chain is Agmatine deiminase, found in Pseudomonas aeruginosa (strain UCBPP-PA14).